Consider the following 634-residue polypeptide: Chaperone protein DnaK (634 aa).

Residue Thr-197 is modified to Phosphothreonine; by autocatalysis. Basic and acidic residues predominate over residues 515–528; the sequence is LHKEDDKKRKESVD. 2 disordered regions span residues 515–536 and 595–634; these read LHKEDDKKRKESVDARNGADAI and YKAASAGKNAGGTAGGNGNAGSNGNSGAKKDDDVIDAEVE. Residues 603 to 615 show a composition bias toward gly residues; sequence NAGGTAGGNGNAG.

This sequence belongs to the heat shock protein 70 family.

Functionally, acts as a chaperone. The sequence is that of Chaperone protein DnaK from Campylobacter hominis (strain ATCC BAA-381 / DSM 21671 / CCUG 45161 / LMG 19568 / NCTC 13146 / CH001A).